A 74-amino-acid polypeptide reads, in one-letter code: Large ribosomal subunit protein uL29 (74 aa).

It belongs to the universal ribosomal protein uL29 family.

In Nostoc sp. (strain PCC 7120 / SAG 25.82 / UTEX 2576), this protein is Large ribosomal subunit protein uL29.